A 149-amino-acid chain; its full sequence is Ribosome maturation factor RimP (149 aa).

It belongs to the RimP family.

Its subcellular location is the cytoplasm. In terms of biological role, required for maturation of 30S ribosomal subunits. This is Ribosome maturation factor RimP from Neisseria gonorrhoeae (strain NCCP11945).